The sequence spans 72 residues: ATP synthase subunit c (72 aa).

Transmembrane regions (helical) follow at residues 1-21 (MSLG…GAGI) and 48-68 (MFIG…FSFI).

It belongs to the ATPase C chain family. As to quaternary structure, F-type ATPases have 2 components, F(1) - the catalytic core - and F(0) - the membrane proton channel. F(1) has five subunits: alpha(3), beta(3), gamma(1), delta(1), epsilon(1). F(0) has three main subunits: a(1), b(2) and c(10-14). The alpha and beta chains form an alternating ring which encloses part of the gamma chain. F(1) is attached to F(0) by a central stalk formed by the gamma and epsilon chains, while a peripheral stalk is formed by the delta and b chains.

It localises to the cell membrane. Its function is as follows. F(1)F(0) ATP synthase produces ATP from ADP in the presence of a proton or sodium gradient. F-type ATPases consist of two structural domains, F(1) containing the extramembraneous catalytic core and F(0) containing the membrane proton channel, linked together by a central stalk and a peripheral stalk. During catalysis, ATP synthesis in the catalytic domain of F(1) is coupled via a rotary mechanism of the central stalk subunits to proton translocation. Functionally, key component of the F(0) channel; it plays a direct role in translocation across the membrane. A homomeric c-ring of between 10-14 subunits forms the central stalk rotor element with the F(1) delta and epsilon subunits. This is ATP synthase subunit c from Bacillus caldotenax.